A 742-amino-acid polypeptide reads, in one-letter code: F-box only protein 30 (742 aa).

The segment at 49 to 108 adopts a TRAF-type zinc-finger fold; it reads EHRLLCPFERVPCLNSNFGCPFTLARNKVAEHLEMCPASVVCCTMEWNRWPVSYSDRKSY. Positions 214–242 are disordered; the sequence is SLQGTTNEMDEESNRESSQDRNAKDQDHL. A compositionally biased stretch (basic and acidic residues) spans 225–242; the sequence is ESNRESSQDRNAKDQDHL. Serine 379 bears the Phosphoserine mark. The F-box domain occupies 607-653; that stretch reads SDHLSSLPFEVLQHIAGFLDGFSLCQLACVSRLMRDICGSLLQSRGM.

Part of a SCF (SKP1-cullin-F-box) protein ligase complex. Interacts with SKP1, CUL1 and RBX1/ROC1. Post-translationally, auto-ubiquitinated. In terms of processing, may be neddylated. Neddylation may be required for E3 ligase activity.

Its pathway is protein modification; protein ubiquitination. In terms of biological role, substrate-recognition component of the SCF (SKP1-CUL1-F-box protein)-type E3 ubiquitin ligase complex. Required for muscle atrophy following denervation. The chain is F-box only protein 30 (Fbxo30) from Rattus norvegicus (Rat).